We begin with the raw amino-acid sequence, 1608 residues long: MAPRSSKGKSNNKGKGGDKKKRDDKLLAPSLVEITVTTPYETQVILKGVSTDKIIDVRRLLASHVETCHFTNYSLSHKVKGHKLNDNIQVLSLKPCFLRMIPEEYLEESQALTQVRRVIDIVACTTRFFSKSPNKSIVAGNANPTPAPDGLDMVAIHTTPKLSQFYEFFSIHHLSPPILHLKKVDGEEAGEKRDGDYFGLKVKICNGKVIHVIASVKGFFAVGKQLSHCHSIVDLLQNVSNAFAKAYESLMKAFTDRNKFGNLPFGLRSNTWLVPSPVSESASPLPTEDEHWGGNGGGQGRNGEYDHRPWAAEFSVLATLPCKTEEERVIRDKKAFLLHSQFIDTSVQRAVRAICNVMDTNQQTSGTTDLPAGSILLEDHVGDLSIVVKRDIASLDSKPEATFQNDAFVLSSEELAERNLLKGITADESVIVHDTPALGKVIVRQCGYTAVVNVKGQTQKAMSDFRDILIDDLPDGGANALNLNSLRVEFHRPHSVGTSVENQPTQLDWDDLESYRCIIQELVKINLTKLEETRVSSVRPIRWELGSTWVQHLQKKETDVCGKPATNDETELSVKGLGKQFKDLKSKSKKSENISAVNEKDTRLHELNEEDDLGQKSIDGLFTELKELLSEEAFSRLKETGTGLHLKSKEELTNMAYGYYDEIALPRLVADFGSLELSPVDGRTLTDFMHIRGLQMRSLGHVAKLAEKLPHIQSLCIHEMITRAFKHLLRAVIASVNNMAELPVAVAASLNFMLGRRELEGCDRIPGEEYCLRLQWLQKFLSRKFGWIQKDEFHHLKKFSILRGLCQKVGLELVSRDFDFDSPNPFMSSDIIGLVPVCKHVLCISSDGRTLLESSKLALDKGKLDDAVSYGTKALVKMIAVCGPYHRNTACAYSLLAVVLYHTGDFNQATIYQQKALDINERELGLDHPDTMKSYGDLSVFYYRLQHFELALKYVNRALFLLHFTCGLSHPNTAATYINVAMMEKEVGNDHLALRYLHEALKSNKRLLGADHIQTAASYHAIAVALSFMEAHSLSVQHEQTTLQILTAKLGADDLRTQDAAAWLEYFESRAIEQQEAGRNGIPKPDASIASKGHLSVSDLLDYISSDPDTKGNVAHRKHRRARILQVNDKVASADDDAHRVASQIDIVTWNNVAEADVTKSRSEVNDPDTVVDKTNIETGDIVVHRLNVDRQTVEESTLDEGWQEAYSKGRSGNGAGRKSRQRQPDLMKKRMLLNKHHNRNQDVQQQNIYSPLQKTSKGPSLSKSSPRRALKNAEIDVSTNTTKPQLKASGAAAVTSTTLASKSLSYKEVALAPPGTVLKPMLEKLELNLERTETQIYRTSSASSGEESKSDTVMLDLPIEGTELHCEKQESQESAESVENLTSESEGDLGSYRGKKTSDISRTKLSASAEPYNPGGFLVIDLQSSAATIGSYPIMVADPISWAVVSCGIHSPPYYSAIHSNGVGTPRSMNPDAPEFVPRRSLQNSSQHAGEDASVSVDSSSCLKAEKDAVDLKKRELASFIVKSSQKEVPAALSKTSPEAESGGTSEKDSAVTEIVYSREEENGANANETNGGEGFVIVAKKRRRKNKVRLTNVAAGLYHQPSSVCA.

Residues 1-12 (MAPRSSKGKSNN) are compositionally biased toward basic residues. Disordered stretches follow at residues 1–22 (MAPRSSKGKSNNKGKGGDKKKR) and 278–303 (VSESASPLPTEDEHWGGNGGGQGRNG). The Clu domain maps to 288-564 (EDEHWGGNGG…KKETDVCGKP (277 aa)). TPR repeat units follow at residues 848–881 (GRTLLESSKLALDKGKLDDAVSYGTKALVKMIAV), 890–923 (ACAYSLLAVVLYHTGDFNQATIYQQKALDINERE), 932–965 (MKSYGDLSVFYYRLQHFELALKYVNRALFLLHFT), and 974–1007 (AATYINVAMMEKEVGNDHLALRYLHEALKSNKRL). Disordered stretches follow at residues 1194-1226 (VEESTLDEGWQEAYSKGRSGNGAGRKSRQRQPD), 1238-1292 (HNRN…ASGA), 1369-1400 (KQESQESAESVENLTSESEGDLGSYRGKKTSD), 1466-1499 (TPRSMNPDAPEFVPRRSLQNSSQHAGEDASVSVD), and 1531-1552 (PAALSKTSPEAESGGTSEKDSA). Residues 1217–1224 (GRKSRQRQ) carry the Nuclear localization signal motif. Polar residues-rich tracts occupy residues 1242–1265 (QDVQQQNIYSPLQKTSKGPSLSKS) and 1373–1385 (QESAESVENLTSE). The segment covering 1535 to 1546 (SKTSPEAESGGT) has biased composition (polar residues).

The protein resides in the nucleus. It localises to the cytoplasm. It is found in the cytosol. In terms of biological role, may act as the scaffold of a protein complex, which sequesters key factors that are required for the G2 to M transition in meristematic tissues. Together with REC2, REC3 and FMT/CLU, contributes to the establishment of the cellular volume devoted to the chloroplast compartment. The chain is Protein REDUCED CHLOROPLAST COVERAGE 3 from Arabidopsis thaliana (Mouse-ear cress).